The primary structure comprises 408 residues: DNA-directed RNA polymerase subunit Rpo1C (408 aa).

This sequence belongs to the RNA polymerase beta' chain family. Part of the RNA polymerase complex.

The protein localises to the cytoplasm. The catalysed reaction is RNA(n) + a ribonucleoside 5'-triphosphate = RNA(n+1) + diphosphate. DNA-dependent RNA polymerase (RNAP) catalyzes the transcription of DNA into RNA using the four ribonucleoside triphosphates as substrates. Forms part of the jaw domain. The protein is DNA-directed RNA polymerase subunit Rpo1C of Methanosarcina mazei (strain ATCC BAA-159 / DSM 3647 / Goe1 / Go1 / JCM 11833 / OCM 88) (Methanosarcina frisia).